The primary structure comprises 107 residues: Large ribosomal subunit protein uL24 (107 aa).

Belongs to the universal ribosomal protein uL24 family. In terms of assembly, part of the 50S ribosomal subunit.

In terms of biological role, one of two assembly initiator proteins, it binds directly to the 5'-end of the 23S rRNA, where it nucleates assembly of the 50S subunit. Functionally, one of the proteins that surrounds the polypeptide exit tunnel on the outside of the subunit. The protein is Large ribosomal subunit protein uL24 of Streptomyces avermitilis (strain ATCC 31267 / DSM 46492 / JCM 5070 / NBRC 14893 / NCIMB 12804 / NRRL 8165 / MA-4680).